The sequence spans 397 residues: Acetate kinase (397 aa).

Position 8 (N8) interacts with Mg(2+). K15 contacts ATP. Position 89 (R89) interacts with substrate. Residue D146 is the Proton donor/acceptor of the active site. Residues 206–210, 281–283, and 329–333 contribute to the ATP site; these read HLGNG, DLR, and GVGEN. E382 provides a ligand contact to Mg(2+).

The protein belongs to the acetokinase family. Homodimer. Requires Mg(2+) as cofactor. Mn(2+) is required as a cofactor.

The protein localises to the cytoplasm. The catalysed reaction is acetate + ATP = acetyl phosphate + ADP. The protein operates within metabolic intermediate biosynthesis; acetyl-CoA biosynthesis; acetyl-CoA from acetate: step 1/2. Catalyzes the formation of acetyl phosphate from acetate and ATP. Can also catalyze the reverse reaction. In Bacillus mycoides (strain KBAB4) (Bacillus weihenstephanensis), this protein is Acetate kinase.